The following is a 484-amino-acid chain: MHNLTIAEIIQGLKNKSFSSVEITQHFLNRIKTLDTEYNSFITLTEEQALAQATAADARLAAGDAPALCGVPLAHKDIFCTNGVRTSCGSKMLDNFVPPYDATVVTNYSQDGVVILGKTNMDEFAMGSSNETSYYGPVKNPWDTNCVPGGSSGGSAAAVAARLVPGATATDTGGSIRQPAALCGITGIKPTYGRVSRWGMIAFASSLDQAGTMTRTAEDAALMLQSMASYDRKDSTCVDHPIDDYSVNLNAPLAGLKIGIPKEYFGEGLNPGTAEAVQAAIKTYEAMGATVQEVSLPHTHLAVPAYYVIAPAECSANLSRFDGVRYGHRCDNPKDLEDLYRRSRGEGFGEEVKRRILVGTYALSAGFYDAYYRKAQQVRRLIKQDFVDVFSQVDVILGPTSPSPAFEFGSKGSDPVAMYLEDIYTIATNLAGLPGMSIPCGQVDGKPVGLQLIGNYFAEAKLLNIAHKFQTETDFHTQAPAAIK.

Catalysis depends on charge relay system residues lysine 76 and serine 151. Residue serine 175 is the Acyl-ester intermediate of the active site.

This sequence belongs to the amidase family. GatA subfamily. In terms of assembly, heterotrimer of A, B and C subunits.

It carries out the reaction L-glutamyl-tRNA(Gln) + L-glutamine + ATP + H2O = L-glutaminyl-tRNA(Gln) + L-glutamate + ADP + phosphate + H(+). Its function is as follows. Allows the formation of correctly charged Gln-tRNA(Gln) through the transamidation of misacylated Glu-tRNA(Gln) in organisms which lack glutaminyl-tRNA synthetase. The reaction takes place in the presence of glutamine and ATP through an activated gamma-phospho-Glu-tRNA(Gln). The chain is Glutamyl-tRNA(Gln) amidotransferase subunit A from Saccharophagus degradans (strain 2-40 / ATCC 43961 / DSM 17024).